The primary structure comprises 188 residues: Epididymal-specific lipocalin-5 (188 aa).

Positions 1–19 (MENIMPFALLGLCVGLAAG) are cleaved as a signal peptide. The cysteines at positions 82 and 176 are disulfide-linked.

The protein belongs to the calycin superfamily. Lipocalin family. In terms of processing, there are two similar, immunologically cross-reacting forms of this protein, designated B and C, which probably result from different processing of the amino end. Post-translationally, the N-terminus of form C is probably blocked. Synthesized exclusively in the proximal part (caput epididymidis) of the epididymis. It makes up a substantial part of the total protein in the epididymal luminal fluid and binds to the sperm membrane.

It localises to the secreted. Its function is as follows. Associates with spermatozoa in the epididymal fluid but does not bind tightly to them. Binds both all-trans and 9-cis retinoic acid. May act as a retinoid carrier protein which is required for epididymal function and/or sperm maturation. This is Epididymal-specific lipocalin-5 (Lcn5) from Rattus norvegicus (Rat).